Consider the following 196-residue polypeptide: Shikimate kinase (196 aa).

32–37 (GAGKSA) lines the ATP pocket. Ser-36 provides a ligand contact to Mg(2+). Substrate-binding residues include Asp-54, Arg-78, and Gly-100. Arg-138 is a binding site for ATP. Arg-157 lines the substrate pocket. Arg-174 provides a ligand contact to ATP.

The protein belongs to the shikimate kinase family. As to quaternary structure, monomer. Requires Mg(2+) as cofactor.

Its subcellular location is the cytoplasm. It catalyses the reaction shikimate + ATP = 3-phosphoshikimate + ADP + H(+). The protein operates within metabolic intermediate biosynthesis; chorismate biosynthesis; chorismate from D-erythrose 4-phosphate and phosphoenolpyruvate: step 5/7. Its function is as follows. Catalyzes the specific phosphorylation of the 3-hydroxyl group of shikimic acid using ATP as a cosubstrate. The chain is Shikimate kinase from Rhizobium leguminosarum bv. trifolii (strain WSM2304).